Here is a 201-residue protein sequence, read N- to C-terminus: Ribosomal RNA large subunit methyltransferase E (201 aa).

Residues G49, W51, D69, D90, and D113 each coordinate S-adenosyl-L-methionine. Catalysis depends on K153, which acts as the Proton acceptor.

It belongs to the class I-like SAM-binding methyltransferase superfamily. RNA methyltransferase RlmE family.

It localises to the cytoplasm. It carries out the reaction uridine(2552) in 23S rRNA + S-adenosyl-L-methionine = 2'-O-methyluridine(2552) in 23S rRNA + S-adenosyl-L-homocysteine + H(+). In terms of biological role, specifically methylates the uridine in position 2552 of 23S rRNA at the 2'-O position of the ribose in the fully assembled 50S ribosomal subunit. In Desulfotalea psychrophila (strain LSv54 / DSM 12343), this protein is Ribosomal RNA large subunit methyltransferase E.